The sequence spans 604 residues: Glucose-methanol-choline family oxidoreductase mfmG (604 aa).

Residues 1 to 24 form the signal peptide; sequence MYMLRPSSLLLATGLLNQGSSVLA. An N-linked (GlcNAc...) asparagine glycan is attached at Asn32. FAD is bound by residues 44–45 and 65–66; these read TA and EA. 2 N-linked (GlcNAc...) asparagine glycosylation sites follow: Asn76 and Asn97. 126-129 contributes to the FAD binding site; the sequence is NFMA. 4 N-linked (GlcNAc...) asparagine glycosylation sites follow: Asn260, Asn265, Asn401, and Asn460. The active-site Proton acceptor is the His538. FAD is bound by residues Ala572 and 584-585; that span reads PQ.

Belongs to the GMC oxidoreductase family. Homodimer. FAD serves as cofactor.

In terms of biological role, oxidoreductase; part of the gene cluster that mediates the biosynthesis of the phthalide-terpenoid hybrid 11'-O-desmethylfendlerol. MfmG seems not to be involved directly in the biosynthesis of 11'-O-desmethylfendlerol and its role has still to be determined. The biosynthesis of 11'-O-desmethylfendlerol begins with the NR-PKS mfmB that forms 3,5-dimethylorsellinic acid (DMOA), which is then transformed into the phthalide 5,7-dihydroxy-4-(hydroxymethyl)-6-methylphthalide by the cytochrome P450 monooxygenase mfmA and the hydrolase mfmC. Subsequently, the methyltransferase mfmE catalyzes 7-O-methylation to yield 5-hydroxy-4-(hydroxymethyl)-7-methoxy-6-methylphthalide, which undergoes C-3 hydroxylation by the cytochrome P450 monooxygenase mfmF. The resultant cyclopolic acid (2,5-dihydroxy-4-(hydroxymethyl)-7-methoxy-6-methylphthalide) is then farnesylated by the DMATS-type prenyltransferase mfmD to afford 5-O-farnesylcyclopolic acid. Finally, the Pyr4-family terpene cyclase mfmH cyclizes the farnesyl moiety of 5-O-farnesylcyclopolic acid into a drimane-like structure, thus completing the biosynthesis of 11'-O-desmethylfendlerol. The sequence is that of Glucose-methanol-choline family oxidoreductase mfmG from Annulohypoxylon moriforme (Filamentous fungus).